Consider the following 336-residue polypeptide: Tetraacyldisaccharide 4'-kinase (336 aa).

60–67 (TVGGTGKT) is a binding site for ATP.

It belongs to the LpxK family.

It catalyses the reaction a lipid A disaccharide + ATP = a lipid IVA + ADP + H(+). It functions in the pathway glycolipid biosynthesis; lipid IV(A) biosynthesis; lipid IV(A) from (3R)-3-hydroxytetradecanoyl-[acyl-carrier-protein] and UDP-N-acetyl-alpha-D-glucosamine: step 6/6. Functionally, transfers the gamma-phosphate of ATP to the 4'-position of a tetraacyldisaccharide 1-phosphate intermediate (termed DS-1-P) to form tetraacyldisaccharide 1,4'-bis-phosphate (lipid IVA). The protein is Tetraacyldisaccharide 4'-kinase of Pseudomonas fluorescens (strain Pf0-1).